The chain runs to 116 residues: Large ribosomal subunit protein bL17 (116 aa).

This sequence belongs to the bacterial ribosomal protein bL17 family. As to quaternary structure, part of the 50S ribosomal subunit. Contacts proteins L3 and L32.

Its function is as follows. Binds to the 23S rRNA. The sequence is that of Large ribosomal subunit protein bL17 from Deinococcus radiodurans (strain ATCC 13939 / DSM 20539 / JCM 16871 / CCUG 27074 / LMG 4051 / NBRC 15346 / NCIMB 9279 / VKM B-1422 / R1).